A 283-amino-acid chain; its full sequence is NFU1 iron-sulfur cluster scaffold homolog, mitochondrial (283 aa).

The transit peptide at 1-65 (MSKFLSQAAI…ELRMPVACRR (65 aa)) directs the protein to the mitochondrion. The interval 182-250 (IKELLDTRIR…IPEVESVEQV (69 aa)) is nifU. 2 residues coordinate [4Fe-4S] cluster: cysteine 219 and cysteine 222.

The protein belongs to the NifU family.

It localises to the mitochondrion. In terms of biological role, molecular scaffold for [Fe-S] cluster assembly of mitochondrial iron-sulfur proteins. This Drosophila sechellia (Fruit fly) protein is NFU1 iron-sulfur cluster scaffold homolog, mitochondrial.